Reading from the N-terminus, the 1063-residue chain is Coiled-coil domain-containing protein 187 (1063 aa).

7 disordered regions span residues 1–41 (MPTL…AADW), 62–184 (RWPG…SRLH), 219–278 (RVEA…KDED), 300–319 (PPPVLRRHHSKDPSRDPALT), 392–484 (RKGG…ERLG), 496–539 (GQAC…ATQP), and 551–658 (WEDP…LEEK). The segment covering 111-124 (SSVSSGRLSCSSGG) has biased composition (low complexity). Residues 146 to 160 (RKSDARLEQLRDKIR) are compositionally biased toward basic and acidic residues. Positions 163 to 181 (AWQQGSCASLGTSAPSSAS) are enriched in polar residues. The segment covering 219-233 (RVEAKASHGQGRELS) has biased composition (basic and acidic residues). Basic and acidic residues-rich tracts occupy residues 431–442 (TERKHSSLERAR) and 472–484 (SFQRPESPHERLG). Over residues 508–517 (QRQGPSSQRP) the composition is skewed to low complexity. Positions 816-851 (HLRHKQAQLQALETTAKVLKQRVDSLTAKLQGAEAL) form a coiled coil. Positions 1010–1030 (PRSCGKGDPADRPWAGWSGGR) are disordered.

The protein is Coiled-coil domain-containing protein 187 of Homo sapiens (Human).